The sequence spans 309 residues: Zinc transporter ZIP2 (309 aa).

Residues 1-8 (MEVLLGVK) are Extracellular-facing. A helical membrane pass occupies residues 9–29 (IGCLLALLVLTLGCGLTPIYV). Topologically, residues 30 to 43 (KWFQMDAATGHHHR) are cytoplasmic. A helical transmembrane segment spans residues 44 to 64 (VLSLLGCTSAGVFLGAGLMHM). The Extracellular segment spans residues 65-103 (TAEALEGIESEIQKFVEQNSTGSKGNSSRDAASSYVEYP). Residues 104–124 (YGELVISLGFFFVFLLESLAL) form a helical membrane-spanning segment. Residues 125 to 164 (QCCHGAAGGSTVQEEEWGGTHAFGFHKHPAVPSPSRGPLR) are Cytoplasmic-facing. The helical transmembrane segment at 165 to 185 (ALVLLLSLSFHSVFEGLAVGL) threads the bilayer. Positions 175 and 179 each coordinate Zn(2+). Over 186 to 191 (QATVAA) the chain is Extracellular. A helical membrane pass occupies residues 192 to 212 (TIQLCVAVLAHKGLVVFSVGL). H202 is a Zn(2+) binding site. Residues 213 to 225 (RLGKIGTGPRWAT) are Cytoplasmic-facing. A helical transmembrane segment spans residues 226–246 (FCILSLALMSPVGLALGLTVA). At 247–258 (GGASGQTQGLAQ) the chain is on the extracellular side. The chain crosses the membrane as a helical span at residues 259 to 279 (AVLEGIAAGTFLYVTFLEILP). Position 276 (E276) interacts with Zn(2+). Residues 280 to 288 (RELACPEAP) are Cytoplasmic-facing. A helical membrane pass occupies residues 289-309 (LAKYSCVAAGFAFMALIALWA).

The protein belongs to the ZIP transporter (TC 2.A.5) family. As to expression, high expression in the liver, skin and ovary.

The protein resides in the cell membrane. It catalyses the reaction Zn(2+)(in) = Zn(2+)(out). The enzyme catalyses Cd(2+)(in) = Cd(2+)(out). Its function is as follows. Transporter for the divalent cation Zn(2+). Mediates the influx of Zn(2+) into cells from extracellular space. The Zn(2+) uniporter activity is independent of H(+)-driving force, but is modulated by extracellular pH and membrane potential. Transports also other divalent cations Zn(2+), Cd2(+), Cu2(+), Co2(+) in the order of decreasing affinity, respectively. In the skin, aids in the differentiation of keratinocytes in the epidermis. The protein is Zinc transporter ZIP2 (Slc39a2) of Mus musculus (Mouse).